Consider the following 237-residue polypeptide: LexA repressor (237 aa).

The segment at residues 26 to 46 is a DNA-binding region (H-T-H motif); sequence FDEMKDALDLRSKSGIHRLIT. Catalysis depends on for autocatalytic cleavage activity residues Ser-158 and Lys-196.

Belongs to the peptidase S24 family. As to quaternary structure, homodimer.

The enzyme catalyses Hydrolysis of Ala-|-Gly bond in repressor LexA.. Functionally, represses a number of genes involved in the response to DNA damage (SOS response), including recA and lexA. In the presence of single-stranded DNA, RecA interacts with LexA causing an autocatalytic cleavage which disrupts the DNA-binding part of LexA, leading to derepression of the SOS regulon and eventually DNA repair. This Rhodopseudomonas palustris (strain BisA53) protein is LexA repressor.